The following is a 173-amino-acid chain: Cyclic pyranopterin monophosphate synthase (173 aa).

Substrate contacts are provided by residues M75–H77 and M117–E118. D132 is an active-site residue. The disordered stretch occupies residues S152–Q173. Polar residues predominate over residues E162–Q173.

Belongs to the MoaC family. As to quaternary structure, homohexamer; trimer of dimers.

It catalyses the reaction (8S)-3',8-cyclo-7,8-dihydroguanosine 5'-triphosphate = cyclic pyranopterin phosphate + diphosphate. It participates in cofactor biosynthesis; molybdopterin biosynthesis. In terms of biological role, catalyzes the conversion of (8S)-3',8-cyclo-7,8-dihydroguanosine 5'-triphosphate to cyclic pyranopterin monophosphate (cPMP). In Geobacillus sp. (strain WCH70), this protein is Cyclic pyranopterin monophosphate synthase.